We begin with the raw amino-acid sequence, 82 residues long: Delta-actitoxin-Aeq2b 3 (82 aa).

An N-terminal signal peptide occupies residues 1 to 19 (MNRLMILVFAAVILALASA). Positions 20-26 (DEDVDIT) are excised as a propeptide. Cystine bridges form between Cys-32–Cys-79, Cys-34–Cys-69, and Cys-62–Cys-80.

Belongs to the sea anemone sodium channel inhibitory toxin family. Type I subfamily.

The protein resides in the secreted. It is found in the nematocyst. Its function is as follows. Binds specifically to voltage-gated sodium channels (Nav), thereby delaying their inactivation during signal transduction. Causes death to crabs. The protein is Delta-actitoxin-Aeq2b 3 of Actinia equina (Beadlet anemone).